The chain runs to 223 residues: MDTARVYLSLKPSKTAAGAQCVSPPSLPPDACRCPRSHRLALKLSCAGLILLVLALVGMSILVRVLVQKPSVEPCRVLIQENLSKTGSPAKLKCPKDWLSHRDKCFHVSQTSITWKESLADCGGKGATLLLVQDQEELRFLRNLTKRISSSFWIGLSYTLSDENWKWINGSTLNSDVLSITGDTEKDSCASVSQDKVLSESCDSDNIWVCQKELKCECMCNDS.

The Cytoplasmic portion of the chain corresponds to 1–43 (MDTARVYLSLKPSKTAAGAQCVSPPSLPPDACRCPRSHRLALK). The short motif at 32 to 35 (CRCP) is the LCK-binding motif element. The chain crosses the membrane as a helical; Signal-anchor for type II membrane protein span at residues 44–63 (LSCAGLILLVLALVGMSILV). Residues 64 to 223 (RVLVQKPSVE…LKCECMCNDS (160 aa)) lie on the Extracellular side of the membrane. In terms of domain architecture, C-type lectin spans 93 to 212 (KCPKDWLSHR…DSDNIWVCQK (120 aa)). 3 disulfide bridges follow: cysteine 94/cysteine 105, cysteine 122/cysteine 210, and cysteine 189/cysteine 202.

As to quaternary structure, homodimer; disulfide-linked. Interacts with tyrosine kinase LCK. In terms of tissue distribution, expressed in natural killer cells.

The protein resides in the membrane. In terms of biological role, plays a stimulatory role on natural killer (NK) cell cytotoxicity. The chain is Killer cell lectin-like receptor subfamily B member 1A (Klrb1a) from Rattus norvegicus (Rat).